Reading from the N-terminus, the 1282-residue chain is Clustered mitochondria protein homolog (1282 aa).

The segment at 1-43 (MEQNNGTTEHPKEVLDQTNPSNEVTGVPNGNHAEGEGDQNAGE) is disordered. A Clu domain is found at 341 to 585 (DITRPQENYL…RITPLDVLWY (245 aa)). Basic and acidic residues-rich tracts occupy residues 631 to 641 (EAEEKAEESKP) and 653 to 669 (ESEK…RVDI). Disordered stretches follow at residues 631-669 (EAEE…RVDI) and 892-936 (RSQL…PAPA). Residues 924–936 (QASPRPAQSPAPA) show a composition bias toward low complexity. Residues 1003–1036 (AKLYHQLSMLYYQSDDKDAAVELARKAVIVTERT) form a TPR repeat. Positions 1202–1282 (ANLPTRLGTK…SKQSTVKPSS (81 aa)) are disordered. Polar residues predominate over residues 1212-1223 (PQPQVGQTTSEM). The segment covering 1257–1272 (TKQKKRAAARNPKLRG) has biased composition (basic residues). Residues 1273–1282 (SKQSTVKPSS) show a composition bias toward polar residues.

The protein belongs to the CLU family. May associate with the eukaryotic translation initiation factor 3 (eIF-3) complex.

It is found in the cytoplasm. MRNA-binding protein involved in proper cytoplasmic distribution of mitochondria. The sequence is that of Clustered mitochondria protein homolog from Coccidioides immitis (strain RS) (Valley fever fungus).